Reading from the N-terminus, the 739-residue chain is Catalase-peroxidase 1 (739 aa).

Residues 1–33 (MPEDRPIEDSPPIGEAQTDAPAGGCPAGFGRIK) form a disordered region. Residues 113–236 (WHAAGTYRVS…LAAVQMGLIY (124 aa)) constitute a cross-link (tryptophyl-tyrosyl-methioninium (Trp-Tyr) (with M-262)). The active-site Proton acceptor is His-114. The segment at residues 236–262 (YVNPEGPNGNPDPQASAIDIRETFGRM) is a cross-link (tryptophyl-tyrosyl-methioninium (Tyr-Met) (with W-113)). His-277 is a binding site for heme b.

This sequence belongs to the peroxidase family. Peroxidase/catalase subfamily. Homodimer or homotetramer. It depends on heme b as a cofactor. Post-translationally, formation of the three residue Trp-Tyr-Met cross-link is important for the catalase, but not the peroxidase activity of the enzyme.

It carries out the reaction H2O2 + AH2 = A + 2 H2O. It catalyses the reaction 2 H2O2 = O2 + 2 H2O. Bifunctional enzyme with both catalase and broad-spectrum peroxidase activity. May play a role in the intracellular survival of mycobacteria. The chain is Catalase-peroxidase 1 from Mycolicibacterium smegmatis (strain ATCC 700084 / mc(2)155) (Mycobacterium smegmatis).